A 319-amino-acid chain; its full sequence is Acetyl-coenzyme A carboxylase carboxyl transferase subunit alpha (319 aa).

In terms of domain architecture, CoA carboxyltransferase C-terminal spans 35–296 (DLDKEIEQLE…KANLLRQLED (262 aa)).

Belongs to the AccA family. As to quaternary structure, acetyl-CoA carboxylase is a heterohexamer composed of biotin carboxyl carrier protein (AccB), biotin carboxylase (AccC) and two subunits each of ACCase subunit alpha (AccA) and ACCase subunit beta (AccD).

The protein localises to the cytoplasm. It carries out the reaction N(6)-carboxybiotinyl-L-lysyl-[protein] + acetyl-CoA = N(6)-biotinyl-L-lysyl-[protein] + malonyl-CoA. The protein operates within lipid metabolism; malonyl-CoA biosynthesis; malonyl-CoA from acetyl-CoA: step 1/1. Its function is as follows. Component of the acetyl coenzyme A carboxylase (ACC) complex. First, biotin carboxylase catalyzes the carboxylation of biotin on its carrier protein (BCCP) and then the CO(2) group is transferred by the carboxyltransferase to acetyl-CoA to form malonyl-CoA. This is Acetyl-coenzyme A carboxylase carboxyl transferase subunit alpha from Vibrio campbellii (strain ATCC BAA-1116).